Reading from the N-terminus, the 350-residue chain is Protein RecA (350 aa).

67-74 (GPESSGKT) provides a ligand contact to ATP.

The protein belongs to the RecA family.

The protein resides in the cytoplasm. In terms of biological role, can catalyze the hydrolysis of ATP in the presence of single-stranded DNA, the ATP-dependent uptake of single-stranded DNA by duplex DNA, and the ATP-dependent hybridization of homologous single-stranded DNAs. It interacts with LexA causing its activation and leading to its autocatalytic cleavage. This Chlamydia felis (strain Fe/C-56) (Chlamydophila felis) protein is Protein RecA.